The chain runs to 200 residues: Ankyrin repeat-containing protein YAR1 (200 aa).

ANK repeat units lie at residues 49 to 78 and 92 to 121; these read SDST…RANS and TGNT…ADPF. The residue at position 78 (Ser-78) is a Phosphoserine. The disordered stretch occupies residues 152–173; the sequence is VEPEDDEEDTQTEGKNSVQITK. The segment covering 153–162 has biased composition (acidic residues); the sequence is EPEDDEEDTQ. Residues 164-173 are compositionally biased toward polar residues; sequence EGKNSVQITK.

Functionally, required for normal rate of cell proliferation. In Saccharomyces cerevisiae (strain ATCC 204508 / S288c) (Baker's yeast), this protein is Ankyrin repeat-containing protein YAR1 (YAR1).